We begin with the raw amino-acid sequence, 299 residues long: 5,10-dihydrophenazine-1-carboxylate 9-dimethylallyltransferase (299 aa).

Belongs to the aromatic prenyltransferase family.

The catalysed reaction is 5,10-dihydrophenazine 1-carboxylate + dimethylallyl diphosphate = 5,10-dihydro-9-dimethylallylphenazine 1-carboxylate + diphosphate. The protein operates within antibiotic biosynthesis; phenazine biosynthesis. Its activity is regulated as follows. Does not require magnesium or any other divalent metal ions for activity. Its function is as follows. Involved in the biosynthesis of prenylated phenazines. Catalyzes the transfer of a dimethylallyl moiety to C-9 of 5,10-dihydrophenazine 1-carboxylate (dihydro-PCA). Specific for both dimethylallyl diphosphate and dihydro-PCA. The sequence is that of 5,10-dihydrophenazine-1-carboxylate 9-dimethylallyltransferase from Streptomyces anulatus (Streptomyces chrysomallus).